The primary structure comprises 225 residues: Heptaprenylglyceryl phosphate synthase (225 aa).

A sn-glycerol 1-phosphate-binding site is contributed by Lys6. Mg(2+) is bound by residues Asp8 and Thr34. Sn-glycerol 1-phosphate-binding positions include 153–158, Gly183, and 203–204; these read YVEYSG and GN.

The protein belongs to the GGGP/HepGP synthase family. Group I subfamily. In terms of assembly, homodimer. Mg(2+) serves as cofactor.

It catalyses the reaction sn-glycerol 1-phosphate + all-trans-heptaprenyl diphosphate = 3-heptaprenyl-sn-glycero-1-phosphate + diphosphate. It functions in the pathway membrane lipid metabolism; glycerophospholipid metabolism. Prenyltransferase that catalyzes in vivo the transfer of the heptaprenyl moiety of heptaprenyl pyrophosphate (HepPP; 35 carbon atoms) to the C3 hydroxyl of sn-glycerol-1-phosphate (G1P), producing heptaprenylglyceryl phosphate (HepGP). This reaction is an ether-bond-formation step in the biosynthesis of archaea-type G1P-based membrane lipids found in Bacillales. This chain is Heptaprenylglyceryl phosphate synthase, found in Listeria monocytogenes serotype 4a (strain HCC23).